The primary structure comprises 114 residues: Small ribosomal subunit protein bS16 (114 aa).

The protein belongs to the bacterial ribosomal protein bS16 family.

The polypeptide is Small ribosomal subunit protein bS16 (Prochlorococcus marinus subsp. pastoris (strain CCMP1986 / NIES-2087 / MED4)).